Reading from the N-terminus, the 213-residue chain is Cytidylate kinase (213 aa).

Gly-7–Thr-15 contacts ATP.

This sequence belongs to the cytidylate kinase family. Type 1 subfamily.

It is found in the cytoplasm. The enzyme catalyses CMP + ATP = CDP + ADP. The catalysed reaction is dCMP + ATP = dCDP + ADP. The protein is Cytidylate kinase of Rhodospirillum rubrum (strain ATCC 11170 / ATH 1.1.1 / DSM 467 / LMG 4362 / NCIMB 8255 / S1).